A 252-amino-acid chain; its full sequence is MGQKTNPIGNRLGIIRGWDSNWYGGNDYGDKLAEDHKIRKYIHARLSKASVSKVIIERTLKLVTVTITTARPGIIIGKGGQEVDKLKEELKKVTDKEVQINIFEIKRPELDAYLVATSIARQIESRISYRRAIKMAIAASMRMNAEGIKVLISGRLNGAEMARSEGFKEGRIPLSTFRADIDYALAEAHTTYGRMGIKVWIMKGEVYGKRDLSPLAGMDKKQSGTGGGKGGDAPRGKSNFNKGGKPDARKRK.

The KH type-2 domain maps to 38 to 106; the sequence is IRKYIHARLS…EVQINIFEIK (69 aa). The disordered stretch occupies residues 214–252; it reads PLAGMDKKQSGTGGGKGGDAPRGKSNFNKGGKPDARKRK. Over residues 224 to 233 the composition is skewed to gly residues; that stretch reads GTGGGKGGDA.

The protein belongs to the universal ribosomal protein uS3 family. In terms of assembly, part of the 30S ribosomal subunit. Forms a tight complex with proteins S10 and S14.

Binds the lower part of the 30S subunit head. Binds mRNA in the 70S ribosome, positioning it for translation. The sequence is that of Small ribosomal subunit protein uS3 from Flavobacterium johnsoniae (strain ATCC 17061 / DSM 2064 / JCM 8514 / BCRC 14874 / CCUG 350202 / NBRC 14942 / NCIMB 11054 / UW101) (Cytophaga johnsonae).